A 444-amino-acid chain; its full sequence is Chromosome partition protein MukF (444 aa).

Positions 212-240 (LDETSGNLRELQDTLNAAGDKLQAQLLRI) are leucine-zipper.

This sequence belongs to the MukF family. As to quaternary structure, interacts, and probably forms a ternary complex, with MukE and MukB via its C-terminal region. The complex formation is stimulated by calcium or magnesium. It is required for an interaction between MukE and MukB.

Its subcellular location is the cytoplasm. The protein localises to the nucleoid. Its function is as follows. Involved in chromosome condensation, segregation and cell cycle progression. May participate in facilitating chromosome segregation by condensation DNA from both sides of a centrally located replisome during cell division. Not required for mini-F plasmid partitioning. Probably acts via its interaction with MukB and MukE. Overexpression results in anucleate cells. It has a calcium binding activity. The chain is Chromosome partition protein MukF from Haemophilus influenzae (strain PittGG).